The chain runs to 280 residues: Tryptophan 2,3-dioxygenase (280 aa).

Substrate-binding positions include 49–53 (FIIIH), Y111, and R115. H238 is a binding site for heme. T252 contributes to the substrate binding site.

This sequence belongs to the tryptophan 2,3-dioxygenase family. Homotetramer. It depends on heme as a cofactor.

The enzyme catalyses L-tryptophan + O2 = N-formyl-L-kynurenine. It participates in amino-acid degradation; L-tryptophan degradation via kynurenine pathway; L-kynurenine from L-tryptophan: step 1/2. Heme-dependent dioxygenase that catalyzes the oxidative cleavage of the L-tryptophan (L-Trp) pyrrole ring and converts L-tryptophan to N-formyl-L-kynurenine. Catalyzes the oxidative cleavage of the indole moiety. This Geobacillus thermodenitrificans (strain NG80-2) protein is Tryptophan 2,3-dioxygenase.